The sequence spans 349 residues: E3 ubiquitin-protein ligase SINA-like 10 (349 aa).

Positions 1-77 are disordered; sequence MARFSVCGGD…STSDDSDREV (77 aa). The RING-type; degenerate zinc finger occupies 113-149; the sequence is CPICCEPLKIPIFQCDNGHLACTLCCTKVRNRCPSCT. An SBD region spans residues 163-344; that stretch reads VIEASRVSCL…NLQIWIGHGR (182 aa). The SIAH-type zinc-finger motif lies at 166 to 224; that stretch reads ASRVSCLNAKYGCKESTSYGNRFSHEQVCVFTPCSCPILDCHYTGYYKDLNNHVRAEHK. Positions 171, 178, 190, 194, 201, 206, 218, and 223 each coordinate Zn(2+).

Belongs to the SINA (Seven in absentia) family.

It carries out the reaction S-ubiquitinyl-[E2 ubiquitin-conjugating enzyme]-L-cysteine + [acceptor protein]-L-lysine = [E2 ubiquitin-conjugating enzyme]-L-cysteine + N(6)-ubiquitinyl-[acceptor protein]-L-lysine.. It participates in protein modification; protein ubiquitination. Its function is as follows. E3 ubiquitin-protein ligase that mediates ubiquitination and subsequent proteasomal degradation of target proteins. E3 ubiquitin ligases accept ubiquitin from an E2 ubiquitin-conjugating enzyme in the form of a thioester and then directly transfers the ubiquitin to targeted substrates. It probably triggers the ubiquitin-mediated degradation of different substrates. The chain is E3 ubiquitin-protein ligase SINA-like 10 from Arabidopsis thaliana (Mouse-ear cress).